The sequence spans 436 residues: ATP-dependent RNA helicase RhlB (436 aa).

Residues 9–37 (QKFADFPLHKEVHQALNEAGFEFCTPIQA) carry the Q motif motif. Residues 40-219 (LPILLEKKDI…YDHMNEPEKV (180 aa)) form the Helicase ATP-binding domain. 53–60 (AQTGTGKT) lines the ATP pocket. Positions 165 to 168 (DEAD) match the DEAD box motif. The region spanning 243-390 (KMPLLLSLLE…VTSYDSDALL (148 aa)) is the Helicase C-terminal domain. The tract at residues 392–436 (DIPPPVRIHRKPSTHTRNTRDRSSGRPQGGQRNGPRRHDKTRRHS) is disordered. The segment covering 425-436 (GPRRHDKTRRHS) has biased composition (basic residues).

It belongs to the DEAD box helicase family. RhlB subfamily. As to quaternary structure, component of the RNA degradosome, which is a multiprotein complex involved in RNA processing and mRNA degradation.

Its subcellular location is the cytoplasm. The catalysed reaction is ATP + H2O = ADP + phosphate + H(+). Functionally, DEAD-box RNA helicase involved in RNA degradation. Has RNA-dependent ATPase activity and unwinds double-stranded RNA. This chain is ATP-dependent RNA helicase RhlB, found in Shewanella pealeana (strain ATCC 700345 / ANG-SQ1).